Reading from the N-terminus, the 510-residue chain is 2,3-bisphosphoglycerate-independent phosphoglycerate mutase (510 aa).

The Mn(2+) site is built by Asp12 and Ser62. Ser62 acts as the Phosphoserine intermediate in catalysis. Residues His121, 151–152 (RD), Arg183, Arg189, 258–261 (RPDR), and Lys331 contribute to the substrate site. Mn(2+) is bound by residues Asp398, His402, Asp439, His440, and His458.

Belongs to the BPG-independent phosphoglycerate mutase family. Monomer. Mn(2+) serves as cofactor.

It catalyses the reaction (2R)-2-phosphoglycerate = (2R)-3-phosphoglycerate. The protein operates within carbohydrate degradation; glycolysis; pyruvate from D-glyceraldehyde 3-phosphate: step 3/5. In terms of biological role, catalyzes the interconversion of 2-phosphoglycerate and 3-phosphoglycerate. The polypeptide is 2,3-bisphosphoglycerate-independent phosphoglycerate mutase (Clostridioides difficile (strain 630) (Peptoclostridium difficile)).